A 464-amino-acid polypeptide reads, in one-letter code: Tyrosine aminotransferase (464 aa).

Lys284 bears the N6-(pyridoxal phosphate)lysine mark.

Belongs to the class-I pyridoxal-phosphate-dependent aminotransferase family. As to quaternary structure, homodimer. Requires pyridoxal 5'-phosphate as cofactor. In terms of tissue distribution, expressed in the muscle. Expressed in the hypodermis and intestine.

It carries out the reaction L-tyrosine + 2-oxoglutarate = 3-(4-hydroxyphenyl)pyruvate + L-glutamate. The enzyme catalyses 3-hydroxy-L-phenylalanine + 2-oxoglutarate = 3-(3-hydroxyphenyl)pyruvate + L-glutamate. The protein operates within amino-acid degradation; L-phenylalanine degradation; acetoacetate and fumarate from L-phenylalanine: step 2/6. In terms of biological role, transaminase involved in tyrosine breakdown. Converts tyrosine to p-hydroxyphenylpyruvate. Has no transaminase activity towards phenylalanine. Plays protective role against oxidative stress, metabolizing meta-tyrosine and negatively regulating its accumulation. Plays a role in modulating the daf-2/insulin receptor-like transduction pathway through regulating tyrosine levels. Negatively regulates dauer formation. Plays a role in longevity. The protein is Tyrosine aminotransferase of Caenorhabditis elegans.